We begin with the raw amino-acid sequence, 118 residues long: Small ribosomal subunit protein uS13 (118 aa).

Positions 94 to 118 (SLPVRGQRTKTNARTRKGPRKAIKK) are disordered.

Belongs to the universal ribosomal protein uS13 family. As to quaternary structure, part of the 30S ribosomal subunit. Forms a loose heterodimer with protein S19. Forms two bridges to the 50S subunit in the 70S ribosome.

Located at the top of the head of the 30S subunit, it contacts several helices of the 16S rRNA. In the 70S ribosome it contacts the 23S rRNA (bridge B1a) and protein L5 of the 50S subunit (bridge B1b), connecting the 2 subunits; these bridges are implicated in subunit movement. Contacts the tRNAs in the A and P-sites. The polypeptide is Small ribosomal subunit protein uS13 (Aeromonas hydrophila subsp. hydrophila (strain ATCC 7966 / DSM 30187 / BCRC 13018 / CCUG 14551 / JCM 1027 / KCTC 2358 / NCIMB 9240 / NCTC 8049)).